Reading from the N-terminus, the 178-residue chain is tRNA (cytidine(56)-2'-O)-methyltransferase (178 aa).

Residues L84, 112–116 (GAEKV), and 130–137 (VGNQPHSE) each bind S-adenosyl-L-methionine.

It belongs to the aTrm56 family. Homodimer.

The protein resides in the cytoplasm. It catalyses the reaction cytidine(56) in tRNA + S-adenosyl-L-methionine = 2'-O-methylcytidine(56) in tRNA + S-adenosyl-L-homocysteine + H(+). In terms of biological role, specifically catalyzes the AdoMet-dependent 2'-O-ribose methylation of cytidine at position 56 in tRNAs. This Methanocella arvoryzae (strain DSM 22066 / NBRC 105507 / MRE50) protein is tRNA (cytidine(56)-2'-O)-methyltransferase.